A 964-amino-acid chain; its full sequence is Adhesion defective protein 3 (964 aa).

Positions 1 to 32 (MADFMDIEPSSHSAKASQYESSAPASSSLGNS) are disordered. The span at 16-32 (ASQYESSAPASSSLGNS) shows a compositional bias: low complexity. In terms of domain architecture, LisH spans 34–66 (PNESLDYYIYDYFVKHNFEEAAQAFLRESKIQI). Low complexity predominate over residues 69–83 (SSSSTAFSPSNNNAP). Disordered regions lie at residues 69–125 (SSSS…EETN), 241–273 (PKGT…PASA), 476–523 (VSMK…TSRM), 572–596 (QTLS…MSMD), and 664–914 (APMI…KPIS). 3 stretches are compositionally biased toward polar residues: residues 93 to 103 (LASPSKISESI), 261 to 270 (AMQNPHNSFP), and 508 to 523 (TQAN…TSRM). A compositionally biased stretch (low complexity) spans 575-589 (SSGNQPPQQSGPNPN). 6 stretches are compositionally biased toward polar residues: residues 664 to 700 (APMI…TNRN), 707 to 716 (SPHQQFSPSA), 724 to 752 (RSMS…QNKE), 767 to 801 (AFPQ…SSLH), 818 to 828 (TIRTTERSTFS), and 857 to 868 (GGTNSISQDTTQ). Positions 869 to 885 (SLQMQSNSVNSSSMVDA) are enriched in low complexity. A compositionally biased stretch (polar residues) spans 894-905 (GDTSALDSNAKN).

The protein belongs to the FLO8 family.

The protein resides in the cytoplasm. Its subcellular location is the nucleus. Its function is as follows. Probable transcriptional regulator involved in cell adhesion. The chain is Adhesion defective protein 3 (adn3) from Schizosaccharomyces pombe (strain 972 / ATCC 24843) (Fission yeast).